A 576-amino-acid polypeptide reads, in one-letter code: Arginine--tRNA ligase (576 aa).

The 'HIGH' region signature appears at 122–132 (PNVAKEMHVGH).

This sequence belongs to the class-I aminoacyl-tRNA synthetase family. In terms of assembly, monomer.

The protein localises to the cytoplasm. It carries out the reaction tRNA(Arg) + L-arginine + ATP = L-arginyl-tRNA(Arg) + AMP + diphosphate. The protein is Arginine--tRNA ligase of Mannheimia succiniciproducens (strain KCTC 0769BP / MBEL55E).